Reading from the N-terminus, the 94-residue chain is Pyrimidine/purine nucleoside phosphorylase (94 aa).

Belongs to the nucleoside phosphorylase PpnP family.

The catalysed reaction is a purine D-ribonucleoside + phosphate = a purine nucleobase + alpha-D-ribose 1-phosphate. The enzyme catalyses adenosine + phosphate = alpha-D-ribose 1-phosphate + adenine. It catalyses the reaction cytidine + phosphate = cytosine + alpha-D-ribose 1-phosphate. It carries out the reaction guanosine + phosphate = alpha-D-ribose 1-phosphate + guanine. The catalysed reaction is inosine + phosphate = alpha-D-ribose 1-phosphate + hypoxanthine. The enzyme catalyses thymidine + phosphate = 2-deoxy-alpha-D-ribose 1-phosphate + thymine. It catalyses the reaction uridine + phosphate = alpha-D-ribose 1-phosphate + uracil. It carries out the reaction xanthosine + phosphate = alpha-D-ribose 1-phosphate + xanthine. Functionally, catalyzes the phosphorolysis of diverse nucleosides, yielding D-ribose 1-phosphate and the respective free bases. Can use uridine, adenosine, guanosine, cytidine, thymidine, inosine and xanthosine as substrates. Also catalyzes the reverse reactions. The protein is Pyrimidine/purine nucleoside phosphorylase of Salmonella agona (strain SL483).